Reading from the N-terminus, the 446-residue chain is Thymidine phosphorylase (446 aa).

Belongs to the thymidine/pyrimidine-nucleoside phosphorylase family. In terms of assembly, homodimer.

The enzyme catalyses thymidine + phosphate = 2-deoxy-alpha-D-ribose 1-phosphate + thymine. Its pathway is pyrimidine metabolism; dTMP biosynthesis via salvage pathway; dTMP from thymine: step 1/2. In terms of biological role, the enzymes which catalyze the reversible phosphorolysis of pyrimidine nucleosides are involved in the degradation of these compounds and in their utilization as carbon and energy sources, or in the rescue of pyrimidine bases for nucleotide synthesis. The chain is Thymidine phosphorylase from Idiomarina loihiensis (strain ATCC BAA-735 / DSM 15497 / L2-TR).